The sequence spans 128 residues: Large ribosomal subunit protein bL19 (128 aa).

This sequence belongs to the bacterial ribosomal protein bL19 family.

Functionally, this protein is located at the 30S-50S ribosomal subunit interface and may play a role in the structure and function of the aminoacyl-tRNA binding site. This chain is Large ribosomal subunit protein bL19, found in Aromatoleum aromaticum (strain DSM 19018 / LMG 30748 / EbN1) (Azoarcus sp. (strain EbN1)).